The sequence spans 507 residues: tRNA(Ile)-lysidine synthase (507 aa).

An ATP-binding site is contributed by 24 to 29 (SGGGDS). The CMP/dCMP-type deaminase domain occupies 370–500 (PPEEAHMAEA…KLLRDFFARL (131 aa)). Zn(2+) contacts are provided by His-420, Cys-445, and Cys-448.

This sequence belongs to the tRNA(Ile)-lysidine synthase family.

It localises to the cytoplasm. It catalyses the reaction cytidine(34) in tRNA(Ile2) + L-lysine + ATP = lysidine(34) in tRNA(Ile2) + AMP + diphosphate + H(+). In terms of biological role, ligates lysine onto the cytidine present at position 34 of the AUA codon-specific tRNA(Ile) that contains the anticodon CAU, in an ATP-dependent manner. Cytidine is converted to lysidine, thus changing the amino acid specificity of the tRNA from methionine to isoleucine. The sequence is that of tRNA(Ile)-lysidine synthase (tilS) from Thermus thermophilus (strain ATCC BAA-163 / DSM 7039 / HB27).